The following is a 138-amino-acid chain: Cell division protein SepF (138 aa).

The protein belongs to the SepF family. In terms of assembly, homodimer. Interacts with FtsZ.

It localises to the cytoplasm. Cell division protein that is part of the divisome complex and is recruited early to the Z-ring. Probably stimulates Z-ring formation, perhaps through the cross-linking of FtsZ protofilaments. Its function overlaps with FtsA. The protein is Cell division protein SepF of Limosilactobacillus reuteri (strain DSM 20016) (Lactobacillus reuteri).